The following is a 763-amino-acid chain: Phosphoglycerol transferase I (763 aa).

Helical transmembrane passes span 1–21 (MSELLSVALFLASVLIYAWKA), 26–46 (WWFAATLTVLGLFVILNITLY), 77–97 (ILPGIGIALALVAVFGALGWV), and 108–128 (VGYSLLALLLALGSVDASPAF).

The protein belongs to the OpgB family.

It is found in the cell inner membrane. The catalysed reaction is a phosphatidylglycerol + a membrane-derived-oligosaccharide D-glucose = a 1,2-diacyl-sn-glycerol + a membrane-derived-oligosaccharide 6-(glycerophospho)-D-glucose.. Its pathway is glycan metabolism; osmoregulated periplasmic glucan (OPG) biosynthesis. Transfers a phosphoglycerol residue from phosphatidylglycerol to the membrane-bound nascent glucan backbones. This chain is Phosphoglycerol transferase I, found in Salmonella heidelberg (strain SL476).